Here is a 1720-residue protein sequence, read N- to C-terminus: DNA-directed RNA polymerase I subunit RPA1 (1720 aa).

Positions 64, 67, 74, 77, 104, and 107 each coordinate Zn(2+). Residues 110 to 201 (LTCPRAVIHL…IALFWKAHMN (92 aa)) are clamp. Zn(2+) is bound by residues cysteine 205 and cysteine 208. A Phosphoserine modification is found at serine 240. Residues 320–426 (FTNGQTVNLQ…IRQILEKKEG (107 aa)) are clamp. Positions 403–416 (DSEMDKLMMDKYPG) are rudder. Lysine 424, arginine 429, and arginine 436 together coordinate DNA. The segment at 468 to 542 (YPQPVTPWNV…QGTKIVCRHV (75 aa)) is involved in RRN3 binding to Pol I complex. Arginine 552 lines the RNA pocket. Aspartate 588, aspartate 590, and aspartate 592 together coordinate Mg(2+). Position 592 (aspartate 592) interacts with RNA. The segment at 805-883 (KPKADVKRQR…NEINKACMPF (79 aa)) is funnel. Positions 960–1001 (KPPEFFFHCMAGREGLVDTAVKTSRSGYLQRCIIKHLEGLVV) are bridging helix. A mediates the interaction with TOP2A region spans residues 1060–1155 (ADPKKALHHF…SLSVWRPDIY (96 aa)). The trigger loop stretch occupies residues 1207-1248 (PGEAVGLLAAQSIGEPSTQMTLNTFHFAGRGEMNVTLGIPRL). Residue arginine 1249 participates in DNA binding. Positions 1365-1498 (RNVNTRRATQ…SQEPQGPEAM (134 aa)) are disordered. A compositionally biased stretch (basic and acidic residues) spans 1373–1390 (TQRDLDNAGELGRSRGEQ). Serine 1386 is modified (phosphoserine). Acidic residues-rich tracts occupy residues 1391 to 1412 (EGDEEEEGHIVDAEAEEGDADA) and 1422 to 1446 (EEEVDYESEEEEEREGEENDDEDMQ). Residues 1447 to 1461 (EERNPHREGARKTQE) are compositionally biased toward basic and acidic residues. The span at 1462-1474 (QDEEVGLGTEEDP) shows a compositional bias: acidic residues.

Belongs to the RNA polymerase beta' chain family. In terms of assembly, component of the RNA polymerase I (Pol I) complex consisting of 13 subunits: a ten-subunit catalytic core composed of POLR1A/RPA1, POLR1B/RPA2, POLR1C/RPAC1, POLR1D/RPAC2, POLR1H/RPA12, POLR2E/RPABC1, POLR2F/RPABC2, POLR2H/RPABC3, POLR2K/RPABC4 and POLR2L/RPABC5; a mobile stalk subunit POLR1F/RPA43 protruding from the core and additional subunits homologous to general transcription factors POLR1E/RPA49 and POLR1G/RPA34. Part of Pol I pre-initiation complex (PIC), in which Pol I core assembles with RRN3 and promoter-bound UTBF and SL1/TIF-IB complex. Interacts (via dock II domain) with TOP2A; this interaction may assist Pol I transcription initiation by releasing supercoils occurring during DNA unwinding. Interacts with CAVIN1; this interaction induces the dissociation of Pol I complex paused at rDNA terminator sequences. Interacts with MYO1C. Interacts with ERBB2. Interacts with DDX11. Interacts with RECQL5. Requires Mg(2+) as cofactor.

Its subcellular location is the nucleus. It is found in the nucleolus. The protein resides in the chromosome. It carries out the reaction RNA(n) + a ribonucleoside 5'-triphosphate = RNA(n+1) + diphosphate. Functionally, catalytic core component of RNA polymerase I (Pol I), a DNA-dependent RNA polymerase which synthesizes ribosomal RNA precursors using the four ribonucleoside triphosphates as substrates. Transcribes 47S pre-rRNAs from multicopy rRNA gene clusters, giving rise to 5.8S, 18S and 28S ribosomal RNAs. Pol I-mediated transcription cycle proceeds through transcription initiation, transcription elongation and transcription termination stages. During transcription initiation, Pol I pre-initiation complex (PIC) is recruited by the selectivity factor 1 (SL1/TIF-IB) complex bound to the core promoter that precedes an rDNA repeat unit. The PIC assembly bends the promoter favoring the formation of the transcription bubble and promoter escape. Once the polymerase has escaped from the promoter it enters the elongation phase during which RNA is actively polymerized, based on complementarity with the template DNA strand. Highly processive, assembles in structures referred to as 'Miller trees' where many elongating Pol I complexes queue and transcribe the same rDNA coding regions. At terminator sequences downstream of the rDNA gene, PTRF interacts with Pol I and halts Pol I transcription leading to the release of the RNA transcript and polymerase from the DNA. Forms Pol I active center together with the second largest subunit POLR1B/RPA2. Appends one nucleotide at a time to the 3' end of the nascent RNA, with POLR1A/RPA1 contributing a Mg(2+)-coordinating DxDGD motif, and POLR1B/RPA2 participating in the coordination of a second Mg(2+) ion and providing lysine residues believed to facilitate Watson-Crick base pairing between the incoming nucleotide and the template base. Typically, Mg(2+) ions direct a 5' nucleoside triphosphate to form a phosphodiester bond with the 3' hydroxyl of the preceding nucleotide of the nascent RNA, with the elimination of pyrophosphate. Has proofreading activity: Pauses and backtracks to allow the cleavage of a missincorporated nucleotide via POLR1H/RPA12. High Pol I processivity is associated with decreased transcription fidelity. This is DNA-directed RNA polymerase I subunit RPA1 from Homo sapiens (Human).